The chain runs to 114 residues: Nucleoid-associated protein Tlet_0999 (114 aa).

The protein belongs to the YbaB/EbfC family. As to quaternary structure, homodimer.

It localises to the cytoplasm. The protein resides in the nucleoid. In terms of biological role, binds to DNA and alters its conformation. May be involved in regulation of gene expression, nucleoid organization and DNA protection. The chain is Nucleoid-associated protein Tlet_0999 from Pseudothermotoga lettingae (strain ATCC BAA-301 / DSM 14385 / NBRC 107922 / TMO) (Thermotoga lettingae).